The primary structure comprises 388 residues: Processive diacylglycerol beta-glucosyltransferase (388 aa).

The protein belongs to the glycosyltransferase 28 family. UgtP subfamily.

The protein localises to the cell membrane. The enzyme catalyses a 1,2-diacyl-3-O-(beta-D-glucopyranosyl)-sn-glycerol + UDP-alpha-D-glucose = a 1,2-diacyl-3-O-(beta-D-Glc-(1-&gt;6)-beta-D-Glc)-sn-glycerol + UDP + H(+). The catalysed reaction is a 1,2-diacyl-3-O-(beta-D-Glc-(1-&gt;6)-beta-D-Glc)-sn-glycerol + UDP-alpha-D-glucose = a 1,2-diacyl-3-O-(beta-D-Glc-(1-&gt;6)-beta-D-Glc-(1-&gt;6)-beta-D-Glc)-sn-glycerol + UDP + H(+). It catalyses the reaction a 1,2-diacyl-sn-glycerol + UDP-alpha-D-glucose = a 1,2-diacyl-3-O-(beta-D-glucopyranosyl)-sn-glycerol + UDP + H(+). The protein operates within glycolipid metabolism; diglucosyl-diacylglycerol biosynthesis. Functionally, processive glucosyltransferase involved in the biosynthesis of both the bilayer- and non-bilayer-forming membrane glucolipids. Is able to successively transfer up to three glucosyl residues to diacylglycerol (DAG), thereby catalyzing the formation of beta-monoglucosyl-DAG (3-O-(beta-D-glucopyranosyl)-1,2-diacyl-sn-glycerol), beta-diglucosyl-DAG (3-O-(beta-D-glucopyranosyl-beta-(1-&gt;6)-D-glucopyranosyl)-1,2-diacyl-sn-glycerol) and beta-triglucosyl-DAG (3-O-(beta-D-glucopyranosyl-beta-(1-&gt;6)-D-glucopyranosyl-beta-(1-&gt;6)-D-glucopyranosyl)-1,2-diacyl-sn-glycerol). Beta-diglucosyl-DAG is the predominant glycolipid found in Bacillales and is also used as a membrane anchor for lipoteichoic acid (LTA). The sequence is that of Processive diacylglycerol beta-glucosyltransferase from Bacillus mycoides (strain KBAB4) (Bacillus weihenstephanensis).